The chain runs to 530 residues: MARLFTPSESKYYLMALDAGTGSIRAVIFDLEGNQIAVGQAEWRHLAVPDVPGSMEFDLNKNWQLACECMRQALHNAGIAPEYIAAVSACSMREGIVLYNNDGTPIWACANVDARAAREVSELKELHNNTFENKVYRATGQTLALSAIPRLLWLAHHRSDIYRQASTITMISDWLAYMLSGELAVDPSNAGTTGLLDLTTRDWKPALLDMAGLRADILSPVKETGTLLGVVSSHAAELCGLKAGTPVVVGGGDVQLGCLGLGVVRPAQTAVLGGTFWQQVVNLAAPVTDPEMNVRVNPHVIPGMVQAESISFFTGLTMRWFRDAFCAEEKLIAERLGIDTYTLLEEMASRVPPGSWGVMPIFSDRMRFKTWYHAAPSFINLSIDPDKCNKATLFRALEENASIVSACNLQQIADFSNIHPTSLVFAGGGSKGKLWSQILADVSGLPVNIPVVKEATALGCAIAAGVGAGIFSSMAETGERLVRWERTHTPDPEKHELYQDSRDKWQAVYQDQLGLVDHGLTTSLWKAPGL.

This sequence belongs to the FGGY kinase family.

Its subcellular location is the cytoplasm. It carries out the reaction (S)-4,5-dihydroxypentane-2,3-dione + ATP = (2S)-2-hydroxy-3,4-dioxopentyl phosphate + ADP + H(+). Functionally, catalyzes the phosphorylation of autoinducer-2 (AI-2) to phospho-AI-2, which subsequently inactivates the transcriptional regulator LsrR and leads to the transcription of the lsr operon. Phosphorylates the ring-open form of (S)-4,5-dihydroxypentane-2,3-dione (DPD), which is the precursor to all AI-2 signaling molecules, at the C5 position. The protein is Autoinducer-2 kinase of Escherichia coli (strain SMS-3-5 / SECEC).